Here is a 90-residue protein sequence, read N- to C-terminus: MGNGLSKALIVLIRIYQRWISPLFLPTCRYTPSCSAYAVEAIARYGAVKGTYLAIRRILRCHPFAVGGYDPVPTTCPDPCNESSPPNPPC.

This sequence belongs to the UPF0161 family.

It is found in the cell inner membrane. Could be involved in insertion of integral membrane proteins into the membrane. The polypeptide is Putative membrane protein insertion efficiency factor (Thermosynechococcus vestitus (strain NIES-2133 / IAM M-273 / BP-1)).